The sequence spans 217 residues: Large ribosomal subunit protein uL3 (217 aa).

The interval 134-154 is disordered; it reads DATHGNSLSHRAPGSIGQCQT. Glutamine 153 is modified (N5-methylglutamine).

It belongs to the universal ribosomal protein uL3 family. In terms of assembly, part of the 50S ribosomal subunit. Forms a cluster with proteins L14 and L19. Post-translationally, methylated by PrmB.

Its function is as follows. One of the primary rRNA binding proteins, it binds directly near the 3'-end of the 23S rRNA, where it nucleates assembly of the 50S subunit. This Coxiella burnetii (strain Dugway 5J108-111) protein is Large ribosomal subunit protein uL3.